The chain runs to 142 residues: Large ribosomal subunit protein bL17 (142 aa).

This sequence belongs to the bacterial ribosomal protein bL17 family. Part of the 50S ribosomal subunit. Contacts protein L32.

This is Large ribosomal subunit protein bL17 from Chlamydia muridarum (strain MoPn / Nigg).